Reading from the N-terminus, the 112-residue chain is Peptidyl-tRNA hydrolase (112 aa).

Residues 64–99 (EEAKRAGLPTGLISDAGRTQLEPGTPTALAIGPAPD) form a disordered region.

This sequence belongs to the PTH2 family.

The protein resides in the cytoplasm. The enzyme catalyses an N-acyl-L-alpha-aminoacyl-tRNA + H2O = an N-acyl-L-amino acid + a tRNA + H(+). Functionally, the natural substrate for this enzyme may be peptidyl-tRNAs which drop off the ribosome during protein synthesis. In Halobacterium salinarum (strain ATCC 29341 / DSM 671 / R1), this protein is Peptidyl-tRNA hydrolase.